Reading from the N-terminus, the 237-residue chain is MRPSDRTPAQSRPVTITRQFTAHAEGSVLIEFGETKVLCTASFTEGVPRFLKGQGQGWVTAEYGMLPRSTHSRMDREAARGKQSGRTQEIQRLIGRALRAAVDMKALGENTIVIDCDVIQADGGTRTAAITGACVALVDALNWARGKGLIKTNPLKFLIAAVSVGIYKGEPICDLEYVEDSAAETDMNVVMTETGKIIEIQGTAEGEPFSHEELLSLLDLAKHGIREIVDVQKAALS.

Residues Arg86 and 124 to 126 (GTR) contribute to the phosphate site.

Belongs to the RNase PH family. Homohexameric ring arranged as a trimer of dimers.

The enzyme catalyses tRNA(n+1) + phosphate = tRNA(n) + a ribonucleoside 5'-diphosphate. In terms of biological role, phosphorolytic 3'-5' exoribonuclease that plays an important role in tRNA 3'-end maturation. Removes nucleotide residues following the 3'-CCA terminus of tRNAs; can also add nucleotides to the ends of RNA molecules by using nucleoside diphosphates as substrates, but this may not be physiologically important. Probably plays a role in initiation of 16S rRNA degradation (leading to ribosome degradation) during starvation. The chain is Ribonuclease PH from Shewanella loihica (strain ATCC BAA-1088 / PV-4).